We begin with the raw amino-acid sequence, 192 residues long: Sarcoplasmic calcium-binding protein, beta chain (192 aa).

Residue Ala-1 is modified to N-acetylalanine. 4 consecutive EF-hand domains span residues 4–39 (WDNRVKYIVRYMYDIDNDGFLDKNDFECLAVRVTLI), 56–91 (IMANLWNEIAELADFNKDGEVTVDEFKQAVQKNCKG), 100–135 (AFKVFIGNQFKTIDVDGDGMVGVDEYRLDCITRSAF), and 136–171 (ADVKEIDDAYDKLCTEEDKKAGGINLARYQELYAQF). Residues Asp-17, Asp-19, Asp-21, Asp-28, Asp-69, Asn-71, Asp-73, Glu-75, Glu-80, Asp-113, Asp-115, Asp-117, Met-119, and Glu-124 each coordinate Ca(2+).

SCPs from crayfish, lobster, and shrimp are polymorphic dimers; three isotypes (alpha-alpha, alpha-beta, and beta-beta) have been identified.

Like parvalbumins, SCPs seem to be more abundant in fast contracting muscles, but no functional relationship can be established from this distribution. This chain is Sarcoplasmic calcium-binding protein, beta chain, found in Penaeus sp. (Penoeid shrimp).